Here is a 173-residue protein sequence, read N- to C-terminus: Ribosomal RNA large subunit methyltransferase H (173 aa).

S-adenosyl-L-methionine-binding residues include Leu-89 and Gly-121.

The protein belongs to the RNA methyltransferase RlmH family. In terms of assembly, homodimer.

It localises to the cytoplasm. The catalysed reaction is pseudouridine(1915) in 23S rRNA + S-adenosyl-L-methionine = N(3)-methylpseudouridine(1915) in 23S rRNA + S-adenosyl-L-homocysteine + H(+). In terms of biological role, specifically methylates the pseudouridine at position 1915 (m3Psi1915) in 23S rRNA. This chain is Ribosomal RNA large subunit methyltransferase H, found in Chelativorans sp. (strain BNC1).